Here is a 680-residue protein sequence, read N- to C-terminus: MCGSVVSDSEREFEFHFWGFGHLGKEEERIMAGKRSSPFSSPLLRPPPEFLNVKEEGETETPCWRKEVDENLKRLQSLLFGADKFLEKSDFSSAQILGLRLLGFLDSRSVTDADRDFIGPIRREVASKIDLALEGLVSDSDRKAFELANTAPGAIFGSKGGFDVEKIKQSKYFGFHVSQSNGKGVKEMEERHDTDKLIPKAPKSMMQAKLTSLYGNSIGKPDNQRKTSVNNQDRASDECVIVERSHGFGFGTKRPHAETSSLANDGEVKEDGAPNGFVSAKIKLEMDVRQKRGSTESPSSCLSPQSDKNALGRGYGSRSGGLRRGYRSNFVPPVKTNGNNVGNLTSRIGGKTDDALDDSTRTCLEMLCGPDGELPEKLRNLEPRLIEHVSNEIMDRDPNVRWDDIAGLEHAKKCVTEMVIWPLLRPDIFKGCRSPGKGLLLFGPPGTGKTMIGKAIAGEAKATFFYISASSLTSKWIGEGEKLVRALFGVASCRQPAVIFVDEIDSLLSQRKSDGEHESSRRLKTQFLIEMEGFDSGSEQILLIGATNRPQELDEAARRRLTKRLYIPLPSSEARAWIIQNLLKKDGLFTLSDDDMNIICNLTEGYSGSDMKNLVKDATMGPLREALKRGIDITNLTKDDMRLVTLQDFKDALQEVRPSVSQNELGIYENWNNQFGSLSL.

Disordered regions lie at residues 214 to 234 (YGNS…NQDR), 250 to 275 (FGTK…GAPN), and 288 to 352 (VRQK…GGKT). Over residues 295 to 308 (TESPSSCLSPQSDK) the composition is skewed to polar residues. Residues 313 to 323 (RGYGSRSGGLR) are compositionally biased toward gly residues. A compositionally biased stretch (polar residues) spans 336 to 346 (TNGNNVGNLTS). Residues A406 and 446–451 (GTGKTM) contribute to the ATP site.

The protein belongs to the AAA ATPase family. It depends on Mg(2+) as a cofactor.

It localises to the nucleus. The enzyme catalyses ATP + H2O = ADP + phosphate + H(+). Involved in DNA double-strand break (DBS) repair via homologous recombination (HR). Limits class II meiotic crossover (CO) formation by regulating the invasion step of meiotic HR. May counteract DMC1 and RAD51-mediated inter-homolog strand invasion to limit CO formation. Functions independently of FANCM. This Arabidopsis thaliana (Mouse-ear cress) protein is ATPase family AAA domain-containing protein FIGL1.